Consider the following 719-residue polypeptide: Polyribonucleotide nucleotidyltransferase (719 aa).

Asp-507 and Asp-513 together coordinate Mg(2+). The 61-residue stretch at 573-633 folds into the KH domain; it reads PKLELFSVDP…EQIKAAKDYI (61 aa). One can recognise an S1 motif domain in the interval 658–719; that stretch reads GQEFQGIVKK…NGKISVDLCE (62 aa).

This sequence belongs to the polyribonucleotide nucleotidyltransferase family. It depends on Mg(2+) as a cofactor.

It is found in the cytoplasm. It carries out the reaction RNA(n+1) + phosphate = RNA(n) + a ribonucleoside 5'-diphosphate. Its function is as follows. Involved in mRNA degradation. Catalyzes the phosphorolysis of single-stranded polyribonucleotides processively in the 3'- to 5'-direction. This chain is Polyribonucleotide nucleotidyltransferase, found in Campylobacter jejuni (strain RM1221).